We begin with the raw amino-acid sequence, 272 residues long: NH(3)-dependent NAD(+) synthetase (272 aa).

Residue 45–52 participates in ATP binding; it reads GISGGQDS. Mg(2+) is bound at residue Asp51. Arg138 contributes to the deamido-NAD(+) binding site. ATP is bound at residue Thr158. Glu163 provides a ligand contact to Mg(2+). The deamido-NAD(+) site is built by Lys171 and Asp178. Positions 187 and 209 each coordinate ATP. Position 258 to 259 (258 to 259) interacts with deamido-NAD(+); that stretch reads HK.

It belongs to the NAD synthetase family. As to quaternary structure, homodimer.

It catalyses the reaction deamido-NAD(+) + NH4(+) + ATP = AMP + diphosphate + NAD(+) + H(+). It functions in the pathway cofactor biosynthesis; NAD(+) biosynthesis; NAD(+) from deamido-NAD(+) (ammonia route): step 1/1. Catalyzes the ATP-dependent amidation of deamido-NAD to form NAD. Uses ammonia as a nitrogen source. This is NH(3)-dependent NAD(+) synthetase from Bacillus licheniformis (strain ATCC 14580 / DSM 13 / JCM 2505 / CCUG 7422 / NBRC 12200 / NCIMB 9375 / NCTC 10341 / NRRL NRS-1264 / Gibson 46).